We begin with the raw amino-acid sequence, 630 residues long: Probable potassium transport system protein Kup (630 aa).

12 helical membrane-spanning segments follow: residues 17 to 37 (LAIAAIGVVFGDIGTSPLYSL), 51 to 71 (PSAILGVISLLFWAIILVVGI), 105 to 125 (ITGLMMALGIFGACMFYGDAV), 144 to 164 (PQLSHLVLPITIVILIALFWI), 175 to 195 (LFGPIMVLWFVTIAALGIYHI), 218 to 238 (VLLAYVVLGSVVLVLTGAEAL), 255 to 275 (YVLVMPSLVLNYFGQGALLLL), 283 to 303 (PFFLLAPQWAALPLVVLSTVA), 344 to 364 (IYVPVVNWLLLFVILCIVIGF), 374 to 394 (YGIAVTATMVITTILAAVVMV), 402 to 422 (LLVAMIIGVFLVIDLGFFGAN), and 428 to 448 (QGGWLPLGIGALLFFLLMTWY).

The protein belongs to the HAK/KUP transporter (TC 2.A.72) family.

Its subcellular location is the cell inner membrane. The enzyme catalyses K(+)(in) + H(+)(in) = K(+)(out) + H(+)(out). Transport of potassium into the cell. Likely operates as a K(+):H(+) symporter. The protein is Probable potassium transport system protein Kup of Burkholderia pseudomallei (strain 1710b).